We begin with the raw amino-acid sequence, 80 residues long: Toxin Acra I-2 (80 aa).

The first 22 residues, 1–22 (MMKLALFSIIVILFSLIGSIHG), serve as a signal peptide directing secretion. The LCN-type CS-alpha/beta domain occupies 25 to 80 (VPGNYPLDSSGNKYPCTVLGDNQSCIDVCKKHGVKYGYCYSFKCWCEFLEDKNVSI). Cystine bridges form between Cys-40–Cys-63, Cys-49–Cys-68, and Cys-53–Cys-70.

In terms of tissue distribution, expressed by the venom gland.

It is found in the secreted. Its function is as follows. Probable neurotoxin that inhibits ion channels. Is toxic to mice. Is about 2.8% of the total protein in the venom. The protein is Toxin Acra I-2 of Androctonus crassicauda (Arabian fat-tailed scorpion).